The sequence spans 481 residues: Cytochrome P450 monooxygenase dpfgJ (481 aa).

The helical transmembrane segment at 23–43 threads the bilayer; it reads LVFTQAAVIGSILFVFLLGLY. A glycan (N-linked (GlcNAc...) asparagine) is linked at Asn338. Cys427 provides a ligand contact to heme.

The protein belongs to the cytochrome P450 family. Heme is required as a cofactor.

The protein resides in the membrane. It functions in the pathway secondary metabolite biosynthesis; terpenoid biosynthesis. Functionally, cytochrome P450 monooxygenase; part of the gene cluster that mediates the biosynthesis of diterpenoid pyrones. The first step of the pathway is the synthesis of the alpha-pyrone moiety by the polyketide synthase dpfgA via condensation of one acetyl-CoA starter unit with 3 malonyl-CoA units and 2 methylations. The alpha-pyrone is then combined with geranylgeranyl pyrophosphate (GGPP) formed by the GGPP synthase dpfgD through the action of the prenyltransferase dpfgC to yield a linear alpha-pyrone diterpenoid. Subsequent steps in the diterpenoid pyrone biosynthetic pathway involve the decalin core formation, which is initiated by the epoxidation of the C10-C11 olefin by the FAD-dependent oxidoreductase dpfgE, and is followed by a cyclization cascade catalyzed by the terpene cyclase dpfgB. The short chain dehydrogenase/reductase dpfgG then oxidizes the 8S hydroxy group to a ketone and the short chain dehydrogenase/reductase dpfgH reduces the ketone to the 8R hydroxy group to yield higginsianin B. Higginsianin B is further methylated by the methyltransferase dpfgI to produce the intermediate named FDDP B. The cytochrome P450 monooxygenase dfgpJ then catalyzes a three-step oxidation at C-27 to generate a carboxylic acid as well as C-26 hydroxylation. Finally, methyltransferase dpfgK methylates the carboxylic acid generated by dpfgJ, yielding the final diterpenoid pyrones from the pathway which were named FDDP D and FDDP E. The protein is Cytochrome P450 monooxygenase dpfgJ of Gibberella zeae (strain ATCC MYA-4620 / CBS 123657 / FGSC 9075 / NRRL 31084 / PH-1) (Wheat head blight fungus).